A 948-amino-acid chain; its full sequence is UvrABC system protein A (948 aa).

31-38 provides a ligand contact to ATP; the sequence is GLSGSGKS. A C4-type zinc finger spans residues 249–277; sequence CPNGHDIGFTELSPRMFSFNSPYGACETC. ABC transporter domains follow at residues 307–586 and 606–934; these read WAGS…KNSL and GNGS…QYLK. 638 to 645 provides a ligand contact to ATP; the sequence is GVSGSGKS. The C4-type zinc finger occupies 737–763; it reads CETCEGDGILKIEMHFLPDVYVTCEVC.

This sequence belongs to the ABC transporter superfamily. UvrA family. In terms of assembly, forms a heterotetramer with UvrB during the search for lesions.

It localises to the cytoplasm. Functionally, the UvrABC repair system catalyzes the recognition and processing of DNA lesions. UvrA is an ATPase and a DNA-binding protein. A damage recognition complex composed of 2 UvrA and 2 UvrB subunits scans DNA for abnormalities. When the presence of a lesion has been verified by UvrB, the UvrA molecules dissociate. The chain is UvrABC system protein A from Leptospira interrogans serogroup Icterohaemorrhagiae serovar copenhageni (strain Fiocruz L1-130).